The primary structure comprises 84 residues: Large ribosomal subunit protein bL27 (84 aa).

The segment at 1 to 25 (MSHKKAGGSTRNGRDSNAQRRGVKK) is disordered.

The protein belongs to the bacterial ribosomal protein bL27 family.

The protein is Large ribosomal subunit protein bL27 of Desulforapulum autotrophicum (strain ATCC 43914 / DSM 3382 / VKM B-1955 / HRM2) (Desulfobacterium autotrophicum).